A 328-amino-acid polypeptide reads, in one-letter code: Ribosomal RNA small subunit methyltransferase H (328 aa).

Residues Gly37–His39, Asp57, Phe83, Asp104, and Gln111 each bind S-adenosyl-L-methionine.

This sequence belongs to the methyltransferase superfamily. RsmH family.

The protein resides in the cytoplasm. It catalyses the reaction cytidine(1402) in 16S rRNA + S-adenosyl-L-methionine = N(4)-methylcytidine(1402) in 16S rRNA + S-adenosyl-L-homocysteine + H(+). Its function is as follows. Specifically methylates the N4 position of cytidine in position 1402 (C1402) of 16S rRNA. In Neisseria meningitidis serogroup C / serotype 2a (strain ATCC 700532 / DSM 15464 / FAM18), this protein is Ribosomal RNA small subunit methyltransferase H.